Reading from the N-terminus, the 190-residue chain is MLLSDRDLRAEITAGRFSIDPFDDTLVQPSSIDVRLDCMFRVFNNTRYTHIDPARQQDELTSLVELVDGEPFVLHPGGFVLGSTLELFTLPEDLAGRLEGKSSLGRLGLLTHSTAGFIDPGFCGHITLELSNVANLPITLWPGMKIGQLCVLRLTSPAEHPYGSASAGSKYQGQRGPTPSRSYENFIKNT.

DCTP is bound by residues 101–106, aspartate 119, 127–129, glutamine 148, tyrosine 162, and glutamine 174; these read KSSLGR and TLE. The Proton donor/acceptor role is filled by glutamate 129. Residues 162 to 190 form a disordered region; it reads YGSASAGSKYQGQRGPTPSRSYENFIKNT. Residues 166-190 are compositionally biased toward polar residues; sequence SAGSKYQGQRGPTPSRSYENFIKNT.

The protein belongs to the dCTP deaminase family. Homotrimer.

It carries out the reaction dCTP + 2 H2O = dUMP + NH4(+) + diphosphate. Its pathway is pyrimidine metabolism; dUMP biosynthesis; dUMP from dCTP: step 1/1. Its function is as follows. Bifunctional enzyme that catalyzes both the deamination of dCTP to dUTP and the hydrolysis of dUTP to dUMP without releasing the toxic dUTP intermediate. The polypeptide is dCTP deaminase, dUMP-forming (Mycobacterium leprae (strain Br4923)).